We begin with the raw amino-acid sequence, 345 residues long: 4-hydroxyproline 2-epimerase (345 aa).

Substrate is bound at residue glutamine 85. Serine 93 functions as the Proton acceptor in the catalytic mechanism. Substrate is bound by residues 94–95 and aspartate 251; that span reads GS. Catalysis depends on cysteine 255, which acts as the Proton donor. Residue 256–257 coordinates substrate; sequence GT.

This sequence belongs to the proline racemase family.

The enzyme catalyses trans-4-hydroxy-L-proline = cis-4-hydroxy-D-proline. In terms of biological role, catalyzes the epimerization of trans-4-hydroxy-L-proline (t4LHyp) to cis-4-hydroxy-D-proline (c4DHyp). May be involved in a degradation pathway of t4LHyp. Can also catalyze the epimerization of trans-3-hydroxy-L-proline (t3LHyp) to cis-3-hydroxy-D-proline (c3DHyp) in vitro, albeit with 2-fold lower efficiency. Displays no proline racemase activity. In Rhizobium etli (strain ATCC 51251 / DSM 11541 / JCM 21823 / NBRC 15573 / CFN 42), this protein is 4-hydroxyproline 2-epimerase.